The sequence spans 144 residues: Transcription antitermination protein NusB (144 aa).

This sequence belongs to the NusB family.

Its function is as follows. Involved in transcription antitermination. Required for transcription of ribosomal RNA (rRNA) genes. Binds specifically to the boxA antiterminator sequence of the ribosomal RNA (rrn) operons. This is Transcription antitermination protein NusB from Histophilus somni (strain 129Pt) (Haemophilus somnus).